A 262-amino-acid chain; its full sequence is Acyl-[acyl-carrier-protein]--UDP-N-acetylglucosamine O-acyltransferase (262 aa).

This sequence belongs to the transferase hexapeptide repeat family. LpxA subfamily. As to quaternary structure, homotrimer.

It is found in the cytoplasm. The catalysed reaction is a (3R)-hydroxyacyl-[ACP] + UDP-N-acetyl-alpha-D-glucosamine = a UDP-3-O-[(3R)-3-hydroxyacyl]-N-acetyl-alpha-D-glucosamine + holo-[ACP]. It functions in the pathway glycolipid biosynthesis; lipid IV(A) biosynthesis; lipid IV(A) from (3R)-3-hydroxytetradecanoyl-[acyl-carrier-protein] and UDP-N-acetyl-alpha-D-glucosamine: step 1/6. In terms of biological role, involved in the biosynthesis of lipid A, a phosphorylated glycolipid that anchors the lipopolysaccharide to the outer membrane of the cell. This is Acyl-[acyl-carrier-protein]--UDP-N-acetylglucosamine O-acyltransferase from Photorhabdus laumondii subsp. laumondii (strain DSM 15139 / CIP 105565 / TT01) (Photorhabdus luminescens subsp. laumondii).